The chain runs to 500 residues: Histidine--tRNA ligase (500 aa).

The protein belongs to the class-II aminoacyl-tRNA synthetase family. Homodimer.

It is found in the cytoplasm. The catalysed reaction is tRNA(His) + L-histidine + ATP = L-histidyl-tRNA(His) + AMP + diphosphate + H(+). The polypeptide is Histidine--tRNA ligase (Ruegeria sp. (strain TM1040) (Silicibacter sp.)).